The chain runs to 138 residues: Large ribosomal subunit protein uL16 (138 aa).

The segment covering 1-13 has biased composition (basic residues); sequence MLQPKRRKYRKEQ. Positions 1–20 are disordered; it reads MLQPKRRKYRKEQKGRNTGI.

The protein belongs to the universal ribosomal protein uL16 family. Part of the 50S ribosomal subunit.

Its function is as follows. Binds 23S rRNA and is also seen to make contacts with the A and possibly P site tRNAs. This Ralstonia nicotianae (strain ATCC BAA-1114 / GMI1000) (Ralstonia solanacearum) protein is Large ribosomal subunit protein uL16.